A 454-amino-acid chain; its full sequence is tRNA modification GTPase MnmE (454 aa).

Positions 23, 80, and 120 each coordinate (6S)-5-formyl-5,6,7,8-tetrahydrofolate. The 162-residue stretch at 216–377 (GMKVVIAGRP…LRNHLKQSMG (162 aa)) folds into the TrmE-type G domain. Residue N226 participates in K(+) binding. Residues 226–231 (NAGKSS), 245–251 (TDIAGTT), 270–273 (DTAG), 335–338 (NKAD), and 358–360 (SAR) each bind GTP. S230 provides a ligand contact to Mg(2+). K(+)-binding residues include T245, I247, and T250. T251 serves as a coordination point for Mg(2+). Position 454 (K454) interacts with (6S)-5-formyl-5,6,7,8-tetrahydrofolate.

The protein belongs to the TRAFAC class TrmE-Era-EngA-EngB-Septin-like GTPase superfamily. TrmE GTPase family. Homodimer. Heterotetramer of two MnmE and two MnmG subunits. The cofactor is K(+).

It localises to the cytoplasm. Functionally, exhibits a very high intrinsic GTPase hydrolysis rate. Involved in the addition of a carboxymethylaminomethyl (cmnm) group at the wobble position (U34) of certain tRNAs, forming tRNA-cmnm(5)s(2)U34. The polypeptide is tRNA modification GTPase MnmE (Escherichia coli (strain SMS-3-5 / SECEC)).